Consider the following 218-residue polypeptide: tRNA (guanosine(18)-2'-O)-methyltransferase (218 aa).

S-adenosyl-L-methionine contacts are provided by T111 and I154.

The protein belongs to the class IV-like SAM-binding methyltransferase superfamily. RNA methyltransferase TrmH family.

It carries out the reaction guanosine(18) in tRNA + S-adenosyl-L-methionine = 2'-O-methylguanosine(18) in tRNA + S-adenosyl-L-homocysteine + H(+). Its function is as follows. Catalyzes the 2'-O methylation of guanosine at position 18 in tRNA. The chain is tRNA (guanosine(18)-2'-O)-methyltransferase from Borreliella burgdorferi (strain ATCC 35210 / DSM 4680 / CIP 102532 / B31) (Borrelia burgdorferi).